We begin with the raw amino-acid sequence, 506 residues long: MNTMTLTPGQLSLSQLYDIWRHPVQLRLDASAIDGINASVACVNDIVAEGRTAYGINTGFGLLAQTRIADEDLQNLQRSLVLSHAAGVGDPLDDAMVRLIMVLKINSLARGFSGIRLSVIEALIALVNAGVYPLIPAKGSVGASGDLAPLAHLSLTLLGEGKARWQGEWLPAQTALKKAGLEPVALAAKEGLALLNGTQASTAFALRGLFEAQELFASAVVCGALTTEAVLGSRRPFDARIHAARGQQGQIDVARLFRHLLTDTSAIAESHHHCHKVQDPYSLRCQPQVMGACLTQLRQTKEVLLAEANAVSDNPLVFADAGEVISGGNFHAEPVAMAADNLALAIAEIGALSERRIALMMDKHMSQLPPFLVKNGGVNSGFMIAQVTAAALASENKALAHPHSVDSLPTSANQEDHVSMAPAAGRRLWEMAANTRGIIAVEWLAACQGIDLREGLTSSPLLEQARQTLREQVAHYTQDRFFAPDIECATALLAQGALQRLVPDFM.

A cross-link (5-imidazolinone (Ala-Gly)) is located at residues 143-145; it reads ASG. Ser-144 bears the 2,3-didehydroalanine (Ser) mark.

This sequence belongs to the PAL/histidase family. In terms of processing, contains an active site 4-methylidene-imidazol-5-one (MIO), which is formed autocatalytically by cyclization and dehydration of residues Ala-Ser-Gly.

It is found in the cytoplasm. It carries out the reaction L-histidine = trans-urocanate + NH4(+). The protein operates within amino-acid degradation; L-histidine degradation into L-glutamate; N-formimidoyl-L-glutamate from L-histidine: step 1/3. In Salmonella typhimurium (strain LT2 / SGSC1412 / ATCC 700720), this protein is Histidine ammonia-lyase.